A 247-amino-acid polypeptide reads, in one-letter code: 7-cyano-7-deazaguanine synthase (247 aa).

Position 21 to 31 (phenylalanine 21 to leucine 31) interacts with ATP. Zn(2+) contacts are provided by cysteine 209, cysteine 224, cysteine 227, and cysteine 230.

It belongs to the QueC family. It depends on Zn(2+) as a cofactor.

The catalysed reaction is 7-carboxy-7-deazaguanine + NH4(+) + ATP = 7-cyano-7-deazaguanine + ADP + phosphate + H2O + H(+). The protein operates within purine metabolism; 7-cyano-7-deazaguanine biosynthesis. Its function is as follows. Catalyzes the ATP-dependent conversion of 7-carboxy-7-deazaguanine (CDG) to 7-cyano-7-deazaguanine (preQ(0)). The polypeptide is 7-cyano-7-deazaguanine synthase (Halorhodospira halophila (strain DSM 244 / SL1) (Ectothiorhodospira halophila (strain DSM 244 / SL1))).